The following is a 1926-amino-acid chain: Myosin-15 (1926 aa).

A Myosin N-terminal SH3-like domain is found at 29–79 (DGKKKCWIPDGENAYIEAEVKGSEDDGTVIVETADGESLSIKEDKIQQMNP). Residues 83 to 770 (EMIEDMAMLT…FLGQLEAIRD (688 aa)) enclose the Myosin motor domain. Position 127 is an N6,N6,N6-trimethyllysine (Lys-127). 176 to 183 (GESGAGKT) is an ATP binding site. 2 actin-binding regions span residues 647–669 (LNKL…NPNV) and 749–763 (RFGI…GFLG). In terms of domain architecture, IQ spans 773–802 (LSKVFTLFQARAQGKLMRIKFQKILEERDA). A coiled-coil region spans residues 833 to 1926 (KSSEVGEEVA…REFGKKVQEE (1094 aa)).

The protein belongs to the TRAFAC class myosin-kinesin ATPase superfamily. Myosin family. As to quaternary structure, muscle myosin is a hexameric protein that consists of 2 heavy chain subunits (MHC), 2 alkali light chain subunits (MLC) and 2 regulatory light chain subunits (MLC-2).

The protein localises to the cytoplasm. The protein resides in the myofibril. Its function is as follows. Muscle contraction. The protein is Myosin-15 (MYH15) of Homo sapiens (Human).